A 70-amino-acid polypeptide reads, in one-letter code: Exodeoxyribonuclease 7 small subunit (70 aa).

Belongs to the XseB family. Heterooligomer composed of large and small subunits.

It is found in the cytoplasm. It catalyses the reaction Exonucleolytic cleavage in either 5'- to 3'- or 3'- to 5'-direction to yield nucleoside 5'-phosphates.. Bidirectionally degrades single-stranded DNA into large acid-insoluble oligonucleotides, which are then degraded further into small acid-soluble oligonucleotides. This Streptococcus sanguinis (strain SK36) protein is Exodeoxyribonuclease 7 small subunit.